We begin with the raw amino-acid sequence, 394 residues long: MSKVDRWLLPEGISELLPDDALQVETLRRRLVDVFQRWGYEYVITPMIEFTDSLLTGSGGDIDLLTFKLTDQLTGKTLGIRADITPQAARMDAHSLKRSGANRLCYAGHVVHTRPQVALGSRTPIQVGVELFGEPGLDADIEVISLLLEVLSLVGMPKQYLDIGHVGVFRALTEAAGFSKEQENTLFLLLQAKAATEIKDWVTTHVREPKLQHWFLELPKLSGSAGVLDRARDVFADAPAEVMVALDELSSIADVVQPRYPDAQLYFDLSELRGYHYHTGIVFGAFSPGVGNAIAKGGRYDHIGEAFGRARPATGFAADLSVICRTLNVETAPPNPGVFAPASTNAAQWQEIQSLREAGERVVSGLSIQDAPYDHQNCDRILIETDTGFQVKAL.

The protein belongs to the class-II aminoacyl-tRNA synthetase family. HisZ subfamily. As to quaternary structure, heteromultimer composed of HisG and HisZ subunits.

Its subcellular location is the cytoplasm. The protein operates within amino-acid biosynthesis; L-histidine biosynthesis; L-histidine from 5-phospho-alpha-D-ribose 1-diphosphate: step 1/9. Its function is as follows. Required for the first step of histidine biosynthesis. May allow the feedback regulation of ATP phosphoribosyltransferase activity by histidine. The protein is ATP phosphoribosyltransferase regulatory subunit of Teredinibacter turnerae (strain ATCC 39867 / T7901).